Here is a 451-residue protein sequence, read N- to C-terminus: Phosphoglucosamine mutase (451 aa).

The Phosphoserine intermediate role is filled by Ser102. Mg(2+) contacts are provided by Ser102, Asp242, Asp244, and Asp246. Position 102 is a phosphoserine (Ser102).

This sequence belongs to the phosphohexose mutase family. Mg(2+) is required as a cofactor. Activated by phosphorylation.

The catalysed reaction is alpha-D-glucosamine 1-phosphate = D-glucosamine 6-phosphate. Its function is as follows. Catalyzes the conversion of glucosamine-6-phosphate to glucosamine-1-phosphate. This Staphylococcus epidermidis (strain ATCC 35984 / DSM 28319 / BCRC 17069 / CCUG 31568 / BM 3577 / RP62A) protein is Phosphoglucosamine mutase.